The primary structure comprises 206 residues: Urease accessory protein UreG (206 aa).

G14–T21 is a GTP binding site.

This sequence belongs to the SIMIBI class G3E GTPase family. UreG subfamily. In terms of assembly, homodimer. UreD, UreF and UreG form a complex that acts as a GTP-hydrolysis-dependent molecular chaperone, activating the urease apoprotein by helping to assemble the nickel containing metallocenter of UreC. The UreE protein probably delivers the nickel.

Its subcellular location is the cytoplasm. Facilitates the functional incorporation of the urease nickel metallocenter. This process requires GTP hydrolysis, probably effectuated by UreG. This Methylocella silvestris (strain DSM 15510 / CIP 108128 / LMG 27833 / NCIMB 13906 / BL2) protein is Urease accessory protein UreG.